Here is a 115-residue protein sequence, read N- to C-terminus: Type 3 secretion system chaperone YscG (115 aa).

This sequence belongs to the YscG family. Component of the heterodimeric YscE-YscG chaperone. The YscE-YscG chaperone forms a stable ternary complex with YscF/SctF.

The protein resides in the cytoplasm. In terms of biological role, chaperone of the type III secretion system (T3SS), also called injectisome, which is used to inject bacterial effector proteins into eukaryotic host cells. Along with YscE, prevents premature polymerization of the YscF/SctF needle protein within the cytoplasm. Required for Yop secretion. This is Type 3 secretion system chaperone YscG from Yersinia enterocolitica.